The sequence spans 347 residues: Protein RecA (347 aa).

66-73 serves as a coordination point for ATP; the sequence is GPESSGKT. The interval 328 to 347 is disordered; it reads MPKPNAPKATDEALDETGTD.

This sequence belongs to the RecA family.

Its subcellular location is the cytoplasm. Functionally, can catalyze the hydrolysis of ATP in the presence of single-stranded DNA, the ATP-dependent uptake of single-stranded DNA by duplex DNA, and the ATP-dependent hybridization of homologous single-stranded DNAs. It interacts with LexA causing its activation and leading to its autocatalytic cleavage. This is Protein RecA from Hydrogenovibrio crunogenus (strain DSM 25203 / XCL-2) (Thiomicrospira crunogena).